A 74-amino-acid polypeptide reads, in one-letter code: Small ribosomal subunit protein eS28 (74 aa).

This sequence belongs to the eukaryotic ribosomal protein eS28 family.

The protein is Small ribosomal subunit protein eS28 of Halorubrum lacusprofundi (strain ATCC 49239 / DSM 5036 / JCM 8891 / ACAM 34).